The chain runs to 338 residues: Ketol-acid reductoisomerase (NADP(+)) (338 aa).

Positions 1–181 constitute a KARI N-terminal Rossmann domain; sequence MQVYYDKDCD…GGGRSGIIET (181 aa). NADP(+)-binding positions include 24–27, arginine 47, serine 50, serine 52, and 82–85; these read YGSQ and DEFQ. Histidine 107 is an active-site residue. Glycine 133 is a binding site for NADP(+). In terms of domain architecture, KARI C-terminal knotted spans 182–327; the sequence is TFKDETETDL…GKLRAMMPWI (146 aa). Mg(2+) is bound by residues aspartate 190, glutamate 194, glutamate 226, and glutamate 230. Position 251 (serine 251) interacts with substrate.

Belongs to the ketol-acid reductoisomerase family. Mg(2+) serves as cofactor.

It catalyses the reaction (2R)-2,3-dihydroxy-3-methylbutanoate + NADP(+) = (2S)-2-acetolactate + NADPH + H(+). It carries out the reaction (2R,3R)-2,3-dihydroxy-3-methylpentanoate + NADP(+) = (S)-2-ethyl-2-hydroxy-3-oxobutanoate + NADPH + H(+). Its pathway is amino-acid biosynthesis; L-isoleucine biosynthesis; L-isoleucine from 2-oxobutanoate: step 2/4. It participates in amino-acid biosynthesis; L-valine biosynthesis; L-valine from pyruvate: step 2/4. Functionally, involved in the biosynthesis of branched-chain amino acids (BCAA). Catalyzes an alkyl-migration followed by a ketol-acid reduction of (S)-2-acetolactate (S2AL) to yield (R)-2,3-dihydroxy-isovalerate. In the isomerase reaction, S2AL is rearranged via a Mg-dependent methyl migration to produce 3-hydroxy-3-methyl-2-ketobutyrate (HMKB). In the reductase reaction, this 2-ketoacid undergoes a metal-dependent reduction by NADPH to yield (R)-2,3-dihydroxy-isovalerate. The polypeptide is Ketol-acid reductoisomerase (NADP(+)) (Saccharophagus degradans (strain 2-40 / ATCC 43961 / DSM 17024)).